We begin with the raw amino-acid sequence, 391 residues long: 1-deoxy-D-xylulose 5-phosphate reductoisomerase (391 aa).

7 residues coordinate NADPH: T11, G12, S13, I14, G37, N39, and N125. K126 provides a ligand contact to 1-deoxy-D-xylulose 5-phosphate. E127 is a binding site for NADPH. Position 151 (D151) interacts with Mn(2+). Residues S152, E153, S176, and H199 each coordinate 1-deoxy-D-xylulose 5-phosphate. E153 serves as a coordination point for Mn(2+). G205 is an NADPH binding site. 1-deoxy-D-xylulose 5-phosphate is bound by residues S212, N217, K218, and E221. E221 contributes to the Mn(2+) binding site.

It belongs to the DXR family. Mg(2+) serves as cofactor. It depends on Mn(2+) as a cofactor.

It catalyses the reaction 2-C-methyl-D-erythritol 4-phosphate + NADP(+) = 1-deoxy-D-xylulose 5-phosphate + NADPH + H(+). It functions in the pathway isoprenoid biosynthesis; isopentenyl diphosphate biosynthesis via DXP pathway; isopentenyl diphosphate from 1-deoxy-D-xylulose 5-phosphate: step 1/6. Catalyzes the NADPH-dependent rearrangement and reduction of 1-deoxy-D-xylulose-5-phosphate (DXP) to 2-C-methyl-D-erythritol 4-phosphate (MEP). This Heliobacterium modesticaldum (strain ATCC 51547 / Ice1) protein is 1-deoxy-D-xylulose 5-phosphate reductoisomerase.